The sequence spans 366 residues: Ribosomal RNA large subunit methyltransferase M (366 aa).

S-adenosyl-L-methionine is bound by residues Ser-188, Cys-221–Gly-224, Asp-240, Asp-260, and Asp-277. Residue Lys-306 is the Proton acceptor of the active site.

This sequence belongs to the class I-like SAM-binding methyltransferase superfamily. RNA methyltransferase RlmE family. RlmM subfamily. Monomer.

It localises to the cytoplasm. The enzyme catalyses cytidine(2498) in 23S rRNA + S-adenosyl-L-methionine = 2'-O-methylcytidine(2498) in 23S rRNA + S-adenosyl-L-homocysteine + H(+). Catalyzes the 2'-O-methylation at nucleotide C2498 in 23S rRNA. This Pectobacterium atrosepticum (strain SCRI 1043 / ATCC BAA-672) (Erwinia carotovora subsp. atroseptica) protein is Ribosomal RNA large subunit methyltransferase M.